The following is a 138-amino-acid chain: uncharacterized protein (138 aa).

The disordered stretch occupies residues 84–104 (PPKKTSPATSSSLKPRPGPRG). The span at 85–98 (PKKTSPATSSSLKP) shows a compositional bias: low complexity.

It to M.pneumoniae MPN_413 and MPN_463.

This is an uncharacterized protein from Mycoplasma pneumoniae (strain ATCC 29342 / M129 / Subtype 1) (Mycoplasmoides pneumoniae).